Consider the following 388-residue polypeptide: Nuclear hormone receptor family member nhr-16 (388 aa).

Positions 11–86 form a DNA-binding region, nuclear receptor; it reads FLKCAICQES…VGMNPAGVQQ (76 aa). NR C4-type zinc fingers lie at residues 14 to 34 and 50 to 74; these read CAIC…CRAC and CQGN…YIKC. One can recognise an NR LBD domain in the interval 115-387; that stretch reads PPSSLMLHIP…DEFYNLMSGR (273 aa).

Belongs to the nuclear hormone receptor family.

It localises to the nucleus. Its function is as follows. Orphan nuclear receptor. In Caenorhabditis elegans, this protein is Nuclear hormone receptor family member nhr-16 (nhr-16).